Consider the following 575-residue polypeptide: FAD-linked oxidoreductase asqF (575 aa).

The first 23 residues, 1–23, serve as a signal peptide directing secretion; the sequence is MALFRLSAAIVVIFLYIWSPSQR. N-linked (GlcNAc...) asparagine glycosylation is found at Asn45 and Asn80. The 189-residue stretch at 118–306 folds into the FAD-binding PCMH-type domain; sequence NQGRIPLYAA…VRVTMRTYPD (189 aa). Position 156 is a pros-8alpha-FAD histidine (His156). Asn370 is a glycosylation site (N-linked (GlcNAc...) asparagine).

This sequence belongs to the oxygen-dependent FAD-linked oxidoreductase family. FAD serves as cofactor.

The enzyme catalyses peniprequinolone + A = yaequinolone E + AH2. Its pathway is secondary metabolite biosynthesis. The protein operates within alkaloid biosynthesis. It participates in mycotoxin biosynthesis. FAD-linked oxidoreductase; part of the gene cluster that mediates the biosynthesis of the aspoquinolone mycotoxins. Within the pathway, asqF performs FAD-dependent dehydrogenation of the dimethylallyl quinolone peniprequinolone to yield the conjugated aryl diene yaequinolone E. The first step of the pathway is catalyzed by the nonribosomal peptide synthetase asqK that condenses anthranilic acid and O-methyl-L-tyrosine to produce 4'-methoxycyclopeptin. 4'-methoxycyclopeptin is then converted to 4'-methoxydehydrocyclopeptin by the ketoglutarate-dependent dioxygenase asqJ. AsqJ also converts its first product 4'-methoxydehydrocyclopeptin to 4'-methoxycyclopenin. The following conversion of 4'-methoxycyclopenin into 4'-methoxyviridicatin is catalyzed by the cyclopenase asqI. 4'-methoxyviridicatin is the precursor of quinolone natural products, and is further converted to quinolinone B. The prenyltransferase asqH1 then catalyzes the canonical Friedel-Crafts alkylation of quinolinone B with dimethylallyl cation to yield dimethylallyl quinolone, which is subjected to FAD-dependent dehydrogenation by the FAD-linked oxidoreductase asqF to yield conjugated aryl diene. The delta(3') double bond then serves as the site of the second alkylation with DMAPP catalyzed by the prenyltransferase asqH2 to yield a carbenium ion intermediate, which can be attacked by H(2)O to yield a styrenyl quinolone containing a C3'-hydroxyprenyl chain. The FAD-dependent monooxygenase asqG performs epoxidation of the terminal C7'-C8' olefin. Finally, after dehydratation of the epoxide at C3 by asqC, the quinolone epoxide rearrangement protein asqO catalyzes an enzymatic 3-exo-tet cyclization to yield the cyclopropyl-THF ring system in aspoquinolone. In Emericella nidulans (strain FGSC A4 / ATCC 38163 / CBS 112.46 / NRRL 194 / M139) (Aspergillus nidulans), this protein is FAD-linked oxidoreductase asqF.